The primary structure comprises 266 residues: Endoplasmic reticulum vesicle protein 25 (266 aa).

Positions 1–26 (MGSSPQSSTRTLLGLLFLLLVQLSSA) are cleaved as a signal peptide. Topologically, residues 27 to 188 (LKFDLHASSG…TNESTNERVK (162 aa)) are lumenal. The GOLD domain maps to 39–129 (ERCIRNFVFK…YKSVELDVEI (91 aa)). A helical membrane pass occupies residues 189–209 (WFAFGTMGMLVGLGVWQVVYL). Residues 210-266 (RAYFRYVDFPVSWRVDGVVANCCSCCEQVEASYLRSSRVVFWSPLVMWTRLSWLILR) are Cytoplasmic-facing.

Belongs to the EMP24/GP25L family.

It localises to the endoplasmic reticulum membrane. The protein resides in the golgi apparatus membrane. Its function is as follows. Constituent of COPII-coated endoplasmic reticulum-derived transport vesicles. Required for efficient transport of a subset of secretory proteins to the Golgi. Facilitates retrograde transport from the Golgi to the endoplasmic reticulum. The sequence is that of Endoplasmic reticulum vesicle protein 25 (erv25) from Aspergillus fumigatus (strain ATCC MYA-4609 / CBS 101355 / FGSC A1100 / Af293) (Neosartorya fumigata).